The primary structure comprises 385 residues: S-adenosylmethionine synthase (385 aa).

Residue His15 coordinates ATP. Asp17 is a Mg(2+) binding site. Glu43 serves as a coordination point for K(+). L-methionine contacts are provided by Glu56 and Gln99. The tract at residues 99–109 (QSPEIAQGVDE) is flexible loop. Residues 164–166 (DAK), 230–231 (RF), Asp239, 245–246 (RK), Ala262, and Lys266 each bind ATP. Asp239 is an L-methionine binding site. Lys270 contacts L-methionine.

It belongs to the AdoMet synthase family. Homotetramer; dimer of dimers. It depends on Mg(2+) as a cofactor. Requires K(+) as cofactor.

The protein resides in the cytoplasm. It catalyses the reaction L-methionine + ATP + H2O = S-adenosyl-L-methionine + phosphate + diphosphate. Its pathway is amino-acid biosynthesis; S-adenosyl-L-methionine biosynthesis; S-adenosyl-L-methionine from L-methionine: step 1/1. Catalyzes the formation of S-adenosylmethionine (AdoMet) from methionine and ATP. The overall synthetic reaction is composed of two sequential steps, AdoMet formation and the subsequent tripolyphosphate hydrolysis which occurs prior to release of AdoMet from the enzyme. This Hydrogenovibrio crunogenus (strain DSM 25203 / XCL-2) (Thiomicrospira crunogena) protein is S-adenosylmethionine synthase.